Reading from the N-terminus, the 215-residue chain is Probable GTP-binding protein EngB (215 aa).

The EngB-type G domain occupies 26–200 (EGIEVAFAGR…RAKLDEWFAP (175 aa)). GTP contacts are provided by residues 34–41 (GRSNAGKS), 61–65 (GRTQL), 79–82 (DLPG), 146–149 (TKAD), and 179–181 (FSS). Mg(2+) contacts are provided by Ser-41 and Thr-63.

This sequence belongs to the TRAFAC class TrmE-Era-EngA-EngB-Septin-like GTPase superfamily. EngB GTPase family. Mg(2+) is required as a cofactor.

Necessary for normal cell division and for the maintenance of normal septation. This is Probable GTP-binding protein EngB from Aliivibrio fischeri (strain MJ11) (Vibrio fischeri).